We begin with the raw amino-acid sequence, 416 residues long: Serine hydroxymethyltransferase (416 aa).

Residues leucine 121 and glycine 125 to leucine 127 each bind (6S)-5,6,7,8-tetrahydrofolate. Lysine 229 is modified (N6-(pyridoxal phosphate)lysine). (6S)-5,6,7,8-tetrahydrofolate contacts are provided by residues glutamate 245 and serine 354–phenylalanine 356.

It belongs to the SHMT family. Homodimer. Pyridoxal 5'-phosphate serves as cofactor.

It is found in the cytoplasm. It carries out the reaction (6R)-5,10-methylene-5,6,7,8-tetrahydrofolate + glycine + H2O = (6S)-5,6,7,8-tetrahydrofolate + L-serine. The protein operates within one-carbon metabolism; tetrahydrofolate interconversion. Its pathway is amino-acid biosynthesis; glycine biosynthesis; glycine from L-serine: step 1/1. Catalyzes the reversible interconversion of serine and glycine with tetrahydrofolate (THF) serving as the one-carbon carrier. This reaction serves as the major source of one-carbon groups required for the biosynthesis of purines, thymidylate, methionine, and other important biomolecules. Also exhibits THF-independent aldolase activity toward beta-hydroxyamino acids, producing glycine and aldehydes, via a retro-aldol mechanism. This is Serine hydroxymethyltransferase from Aliivibrio salmonicida (strain LFI1238) (Vibrio salmonicida (strain LFI1238)).